Reading from the N-terminus, the 329-residue chain is Octaprenyl diphosphate synthase (329 aa).

The isopentenyl diphosphate site is built by lysine 51, arginine 54, and histidine 83. Mg(2+)-binding residues include aspartate 90 and aspartate 94. An all-trans-polyprenyl diphosphate is bound at residue arginine 99. Arginine 100 lines the isopentenyl diphosphate pocket. An all-trans-polyprenyl diphosphate-binding residues include lysine 176, threonine 177, and glutamine 214.

The protein belongs to the FPP/GGPP synthase family. Mg(2+) is required as a cofactor.

The catalysed reaction is 5 isopentenyl diphosphate + (2E,6E)-farnesyl diphosphate = all-trans-octaprenyl diphosphate + 5 diphosphate. Functionally, supplies octaprenyl diphosphate, the precursor for the side chain of the isoprenoid quinones ubiquinone and menaquinone. The protein is Octaprenyl diphosphate synthase (ispB) of Haemophilus influenzae (strain ATCC 51907 / DSM 11121 / KW20 / Rd).